The chain runs to 629 residues: Natural resistance-associated macrophage protein 2 homolog (629 aa).

Over 1-151 (MNNNNNNKKL…KSKFSIKKLK (151 aa)) the chain is Cytoplasmic. The segment at 50-119 (NVVNGSIEDS…SDIDSSGDSI (70 aa)) is disordered. Residues 62–85 (QQQQQQQQQQQQQQQQQQQQQQQQ) show a composition bias toward low complexity. Positions 96–105 (DKPFQDRDSN) are enriched in basic and acidic residues. Low complexity predominate over residues 106–118 (IGDGSDIDSSGDS). Residues 152-172 (SFLGPALFISVGYMDPGNWAT) traverse the membrane as a helical segment. Residues 173–182 (DLEGGSRFGY) lie on the Extracellular side of the membrane. A helical transmembrane segment spans residues 183–203 (QLMWVLLFSNIMALFLQTLVI). Residues 204-224 (KLALVTKNDLAQQCRKEYSKT) lie on the Cytoplasmic side of the membrane. Residues 225 to 245 (VNIFLWLILELAIISTDLAEV) form a helical membrane-spanning segment. The Extracellular portion of the chain corresponds to 246 to 253 (IGTAIGLN). Residues 254–274 (ILFGLPLIAGVAITSLDTLLF) traverse the membrane as a helical segment. At 275–286 (LAIQRWGIRKLE) the chain is on the cytoplasmic side. A helical membrane pass occupies residues 287–307 (LLILLLLSMITMCFVIELFLS). The Extracellular portion of the chain corresponds to 308 to 326 (KPIASEVFSGFVPRLNSDS). The chain crosses the membrane as a helical span at residues 327-347 (VMVATGIVGATTMPHNLFLHG). The Cytoplasmic segment spans residues 348–376 (SVVKSRKIPNDRRKSVIKQAYRYNVIDTV). Residues 377–397 (LALNCAFFVNIAILMLAASVF) traverse the membrane as a helical segment. The Extracellular segment spans residues 398 to 421 (WKSNIQVTELSEAYRLLTKLMDGK). The chain crosses the membrane as a helical span at residues 422 to 442 (LAAVLFGLGLFLAGQSSTITG). The Cytoplasmic portion of the chain corresponds to 443 to 468 (TMAGQIVMEGFIKLRIKPWLRRFITR). A helical transmembrane segment spans residues 469-489 (LLAIIPAAIVIIVLGDKGTYT). Residues 490-491 (LL) lie on the Extracellular side of the membrane. A helical membrane pass occupies residues 492 to 512 (IISQVLLSIGLPFAVVPLIIF). Over 513–527 (TSSYEIMGEFKNRLS) the chain is Cytoplasmic. Residues 528–548 (IIIINSIIALFIIGLNLATIF) form a helical membrane-spanning segment. Residues 549–565 (QLINDFLHNDSIISKCL) are Extracellular-facing. The N-linked (GlcNAc...) asparagine glycan is linked to N557. A helical transmembrane segment spans residues 566–586 (TIIFLIPLSIALCCLLLWLII). Residues 587-629 (SKINFFTNLLSKIFNNNNNNNNKNIINNNNNYSGNTINNQTIQ) lie on the Cytoplasmic side of the membrane.

This sequence belongs to the NRAMP family.

Its subcellular location is the cell membrane. In terms of biological role, divalent transition metal (iron and manganese) transporter. In Dictyostelium discoideum (Social amoeba), this protein is Natural resistance-associated macrophage protein 2 homolog (nramp2).